Reading from the N-terminus, the 229-residue chain is CMRF35-like molecule 6 (229 aa).

The N-terminal stretch at 1–21 (MNPRVIRLWLPSAVLLSLVPG) is a signal peptide. Residues 22-126 (HFPVRGPSTV…FYDAYLQIDK (105 aa)) enclose the Ig-like V-type domain. The Extracellular segment spans residues 22-188 (HFPVRGPSTV…ELRSLLSSPH (167 aa)). The cysteines at positions 43 and 110 are disulfide-linked. N-linked (GlcNAc...) asparagine glycans are attached at residues Asn-90 and Asn-99. The chain crosses the membrane as a helical span at residues 189-209 (FWILVSLKLPLFLSMLGALLW). Topologically, residues 210-229 (VNRPQRCSGGSSAWPCYENQ) are cytoplasmic.

Belongs to the CD300 family.

Its subcellular location is the cell membrane. This Mus musculus (Mouse) protein is CMRF35-like molecule 6 (Cd300c).